Here is a 29-residue protein sequence, read N- to C-terminus: Galanin (29 aa).

Residue Ala29 is modified to Alanine amide.

It belongs to the galanin family.

The protein resides in the secreted. Functionally, contracts smooth muscle of the gastrointestinal and genitourinary tract, regulates growth hormone release, modulates insulin release, and may be involved in the control of adrenal secretion. In Alligator mississippiensis (American alligator), this protein is Galanin (GAL).